Consider the following 205-residue polypeptide: Tumor suppressor candidate gene 1 protein homolog (205 aa).

The segment covering 1–12 (MWRMRGGATRRG) has biased composition (low complexity). The tract at residues 1–49 (MWRMRGGATRRGSCGGEGGGSRGESGRLGRAREGGGGGGGVGWRGRAGG) is disordered. Over residues 13–23 (SCGGEGGGSRG) the composition is skewed to gly residues. A compositionally biased stretch (basic and acidic residues) spans 24-33 (ESGRLGRARE). The span at 34-48 (GGGGGGGVGWRGRAG) shows a compositional bias: gly residues. Residues 66 to 110 (LEALRARDERDRQNARLREENARLRLENRRLRRENRSLFRQALRL) are a coiled coil. Disordered stretches follow at residues 113 to 149 (DSGE…SPRA) and 174 to 205 (GARP…RPWL). S146 carries the phosphoserine modification. Residues 196–205 (HDPDVPRPWL) are compositionally biased toward basic and acidic residues.

This Mus musculus (Mouse) protein is Tumor suppressor candidate gene 1 protein homolog (Tusc1).